We begin with the raw amino-acid sequence, 1144 residues long: Probable translation initiation factor IF-2 (1144 aa).

In terms of domain architecture, DOD-type homing endonuclease spans F232–I362. The tr-type G domain maps to T551–L768. GTP-binding positions include D624 to H628 and N678 to D681.

It belongs to the TRAFAC class translation factor GTPase superfamily. Classic translation factor GTPase family. IF-2 subfamily. In terms of processing, this protein undergoes a protein self splicing that involves a post-translational excision of the intervening region (intein) followed by peptide ligation.

Function in general translation initiation by promoting the binding of the formylmethionine-tRNA to ribosomes. Seems to function along with eIF-2. The polypeptide is Probable translation initiation factor IF-2 (infB) (Thermococcus kodakarensis (strain ATCC BAA-918 / JCM 12380 / KOD1) (Pyrococcus kodakaraensis (strain KOD1))).